The chain runs to 30 residues: Natriuretic peptides A (30 aa).

The propeptide occupies 1 to 3 (APR). Cysteine 11 and cysteine 27 are disulfide-bonded.

It belongs to the natriuretic peptide family. Cleaved upon secretion to produce the functional hormone.

It localises to the secreted. In terms of biological role, hormone playing a key role in cardiovascular homeostasis through regulation of natriuresis, diuresis, and vasodilation. Has a cGMP-stimulating activity. This is Natriuretic peptides A from Pelophylax ridibundus (Marsh frog).